The sequence spans 411 residues: Acetylornithine aminotransferase, mitochondrial (411 aa).

An N6-(pyridoxal phosphate)lysine modification is found at Lys-262.

Belongs to the class-III pyridoxal-phosphate-dependent aminotransferase family. Pyridoxal 5'-phosphate is required as a cofactor.

It is found in the mitochondrion matrix. It carries out the reaction N(2)-acetyl-L-ornithine + 2-oxoglutarate = N-acetyl-L-glutamate 5-semialdehyde + L-glutamate. The protein operates within amino-acid biosynthesis; L-arginine biosynthesis; N(2)-acetyl-L-ornithine from L-glutamate: step 4/4. This chain is Acetylornithine aminotransferase, mitochondrial (ARG8), found in Yarrowia lipolytica (strain CLIB 122 / E 150) (Yeast).